We begin with the raw amino-acid sequence, 497 residues long: Probable zinc metalloprotease TRV_03476 (497 aa).

The first 24 residues, 1-24, serve as a signal peptide directing secretion; that stretch reads MRFLISSLLSGLALLTSLHAFVLA. Residues Asn-100 and Asn-121 are each glycosylated (N-linked (GlcNAc...) asparagine). Residues His-171, Asp-191, and Glu-227 each coordinate Zn(2+). The N-linked (GlcNAc...) asparagine glycan is linked to Asn-242. Residue Asp-254 participates in Zn(2+) binding. Residues 411–497 enclose the Fibronectin type-III domain; it reads MPRNVRVNTN…ERGVAVLPFP (87 aa). Asn-424 carries an N-linked (GlcNAc...) asparagine glycan.

The protein belongs to the peptidase M28 family. M28B subfamily. Zn(2+) serves as cofactor.

The protein resides in the secreted. This chain is Probable zinc metalloprotease TRV_03476, found in Trichophyton verrucosum (strain HKI 0517).